The sequence spans 235 residues: Ribonuclease PH (235 aa).

Phosphate-binding positions include Arg86 and 124–126 (GTR).

The protein belongs to the RNase PH family. Homohexameric ring arranged as a trimer of dimers.

It catalyses the reaction tRNA(n+1) + phosphate = tRNA(n) + a ribonucleoside 5'-diphosphate. In terms of biological role, phosphorolytic 3'-5' exoribonuclease that plays an important role in tRNA 3'-end maturation. Removes nucleotide residues following the 3'-CCA terminus of tRNAs; can also add nucleotides to the ends of RNA molecules by using nucleoside diphosphates as substrates, but this may not be physiologically important. Probably plays a role in initiation of 16S rRNA degradation (leading to ribosome degradation) during starvation. This is Ribonuclease PH from Francisella philomiragia subsp. philomiragia (strain ATCC 25017 / CCUG 19701 / FSC 153 / O#319-036).